We begin with the raw amino-acid sequence, 37 residues long: Large ribosomal subunit protein bL36 (37 aa).

Belongs to the bacterial ribosomal protein bL36 family.

The polypeptide is Large ribosomal subunit protein bL36 (Staphylococcus aureus (strain Mu3 / ATCC 700698)).